We begin with the raw amino-acid sequence, 94 residues long: Small ribosomal subunit protein uS19c (94 aa).

The protein belongs to the universal ribosomal protein uS19 family.

The protein resides in the plastid. It is found in the chloroplast. Protein S19 forms a complex with S13 that binds strongly to the 16S ribosomal RNA. The sequence is that of Small ribosomal subunit protein uS19c (rps19) from Euglena gracilis.